The primary structure comprises 878 residues: Longitudinals lacking protein, isoforms N/O/W/X/Y (878 aa).

Residues valine 32–glutamine 97 form the BTB domain. Disordered stretches follow at residues leucine 115 to leucine 200, serine 228 to serine 340, and glutamine 542 to alanine 583. Composition is skewed to low complexity over residues serine 162–proline 175, serine 228–threonine 251, threonine 263–serine 293, asparagine 329–serine 340, and glutamine 546–glutamine 569. The segment at tyrosine 709–glutamate 731 adopts a C2H2-type 1; degenerate zinc-finger fold. Residues phenylalanine 794–histidine 816 form a C2H2-type 2 zinc finger. Positions serine 826 to proline 863 are disordered. A compositionally biased stretch (polar residues) spans lysine 831 to aspartate 841.

In terms of tissue distribution, by stage 11, isoform W, isoform X and isoform Y are expressed throughout the mesoderm, whereas isoform O is expressed in both mesoderm and ectoderm. From stage 15, expression of isoform O expands to all tissues, whereas expression of isoform W, isoform X and isoform Y becomes restricted during later stages; starting from stage 14 to 16, isoform W, isoform X and isoform Y are expressed in muscle. From stages 14 and 15, isoform W and isoform Y are expressed in the gut. For some isoforms, expression is also seen in specific types of cells in the embryo; isoform O is expressed in the ventral furrow at stage 5 and in the dorsal epidermis from stage 7. Isoform Y shows prominent expression in the gonad starting at stage 15.

Its subcellular location is the nucleus. Functionally, putative transcription factor required for axon growth and guidance in the central and peripheral nervous systems. Repels CNS axons away from the midline by promoting the expression of the midline repellent sli and its receptor robo. The sequence is that of Longitudinals lacking protein, isoforms N/O/W/X/Y from Drosophila melanogaster (Fruit fly).